A 336-amino-acid polypeptide reads, in one-letter code: Probable allantoicase (336 aa).

It belongs to the allantoicase family.

The catalysed reaction is allantoate + H2O = (S)-ureidoglycolate + urea. Its pathway is nitrogen metabolism; (S)-allantoin degradation; (S)-ureidoglycolate from allantoate (aminidohydrolase route): step 1/1. This is Probable allantoicase from Ralstonia nicotianae (strain ATCC BAA-1114 / GMI1000) (Ralstonia solanacearum).